The sequence spans 318 residues: MSDTAISNQRDTAAFPEGGMGSARDFFELLKPRVMSLVIFTALVGIAVAPGGIHPVIAFTALLCIAVGAGASGALNMWYDADIDARMARTANRPIPAGRVTAREAAVFGSILSVFAVMTMGVLVNWVAAALLAFTIFFYLVVYTMWLKRRTPQNIVIGGAAGAFPPMIGWAAVTGSVSIEPFVLFLIIFMWTPPHFWALALYRSGDYEKVGVPMLPVVSGEKETRRQIMLYSLALVPVTLLPGFLGFAGALYMGATAALGAGFLWLAFGIWRTEPGAAQDKAAKRLFGYSILYLFLIFSLLLVEKMLGLGGTAFALAL.

A run of 9 helical transmembrane segments spans residues 37–57, 58–78, 100–120, 122–142, 155–175, 182–202, 228–248, 251–271, and 291–311; these read LVIF…HPVI, AFTA…LNMW, VTAR…VMTM, VLVN…YLVV, IVIG…AVTG, FVLF…LALY, IMLY…LGFA, LYMG…FGIW, and ILYL…GLGG.

The protein belongs to the UbiA prenyltransferase family. Protoheme IX farnesyltransferase subfamily.

The protein resides in the cell inner membrane. It carries out the reaction heme b + (2E,6E)-farnesyl diphosphate + H2O = Fe(II)-heme o + diphosphate. It functions in the pathway porphyrin-containing compound metabolism; heme O biosynthesis; heme O from protoheme: step 1/1. Converts heme B (protoheme IX) to heme O by substitution of the vinyl group on carbon 2 of heme B porphyrin ring with a hydroxyethyl farnesyl side group. This is Protoheme IX farnesyltransferase from Parvibaculum lavamentivorans (strain DS-1 / DSM 13023 / NCIMB 13966).